Reading from the N-terminus, the 156-residue chain is Protein Smg homolog (156 aa).

The protein belongs to the Smg family.

The chain is Protein Smg homolog from Halorhodospira halophila (strain DSM 244 / SL1) (Ectothiorhodospira halophila (strain DSM 244 / SL1)).